The chain runs to 247 residues: Ubiquinone biosynthesis O-methyltransferase (247 aa).

S-adenosyl-L-methionine-binding residues include arginine 39, glycine 70, aspartate 91, and methionine 134.

Belongs to the methyltransferase superfamily. UbiG/COQ3 family.

It catalyses the reaction a 3-demethylubiquinol + S-adenosyl-L-methionine = a ubiquinol + S-adenosyl-L-homocysteine + H(+). The catalysed reaction is a 3-(all-trans-polyprenyl)benzene-1,2-diol + S-adenosyl-L-methionine = a 2-methoxy-6-(all-trans-polyprenyl)phenol + S-adenosyl-L-homocysteine + H(+). Its pathway is cofactor biosynthesis; ubiquinone biosynthesis. O-methyltransferase that catalyzes the 2 O-methylation steps in the ubiquinone biosynthetic pathway. This Cereibacter sphaeroides (strain ATCC 17025 / ATH 2.4.3) (Rhodobacter sphaeroides) protein is Ubiquinone biosynthesis O-methyltransferase.